The chain runs to 110 residues: uncharacterized protein (110 aa).

A run of 2 helical transmembrane segments spans residues 21 to 41 (IQLALANFFAISCLWLKPQIC) and 63 to 83 (PSMIHFLPLISLTFAFSIIVV).

The protein localises to the membrane. This is an uncharacterized protein from Saccharomyces cerevisiae (strain ATCC 204508 / S288c) (Baker's yeast).